The primary structure comprises 321 residues: Gap junction delta-2 protein (321 aa).

Over 1 to 19 (MGEWTILERLLEAAVQQHS) the chain is Cytoplasmic. A helical transmembrane segment spans residues 20–42 (TMIGRILLTVVVIFRILIVAIVG). At 43–75 (ETVYDDEQTMFVCNTLQPGCNQACYDRAFPISH) the chain is on the extracellular side. Residues 76–98 (IRYWVFQIIMVCTPSLCFITYSV) form a helical membrane-spanning segment. The Cytoplasmic segment spans residues 99-197 (HQSAKQRERR…KLRRQEGISR (99 aa)). A disordered region spans residues 117–141 (DRDPPESMGGPGGTGGGGSGGGKRE). Residues 125–137 (GGPGGTGGGGSGG) are compositionally biased toward gly residues. A helical transmembrane segment spans residues 198–220 (FYIIQVVFRNALEIGFLVGQYFL). The Extracellular segment spans residues 221–252 (YGFSVPGLYECDRYPCIKEVECYVSRPTEKTV). Residues 253-275 (FLVFMFAVSGICVVLNLAELNHL) traverse the membrane as a helical segment. Residues 276–321 (GWRKIKLAVRGAQAKRKSVYEIRNKDLPRVSVPNFGRTQSSDSAYV) are Cytoplasmic-facing.

It belongs to the connexin family. Delta-type subfamily. In terms of assembly, a connexon is composed of a hexamer of connexins.

The protein localises to the cell membrane. Its subcellular location is the cell junction. It localises to the gap junction. One gap junction consists of a cluster of closely packed pairs of transmembrane channels, the connexons, through which materials of low MW diffuse from one cell to a neighboring cell. The protein is Gap junction delta-2 protein (GJD2) of Bos taurus (Bovine).